Here is a 75-residue protein sequence, read N- to C-terminus: Probable [Fe-S]-dependent transcriptional repressor (75 aa).

Residues Cys55, Cys60, Cys63, and Cys72 each contribute to the iron-sulfur cluster site.

This sequence belongs to the FeoC family.

Its function is as follows. May function as a transcriptional regulator that controls feoABC expression. In Serratia marcescens, this protein is Probable [Fe-S]-dependent transcriptional repressor.